The sequence spans 361 residues: Trans-enoyl reductase gkaC (361 aa).

The region spanning 15 to 357 is the Enoyl reductase (ER) domain; it reads EDVGSFEISR…RREISGKKMV (343 aa). NADP(+) contacts are provided by residues 48-51, 172-175, 195-198, Y213, 260-261, and 351-352; these read CDWK, SSAS, SPKN, FE, and IS.

This sequence belongs to the zinc-containing alcohol dehydrogenase family. Monomer.

The protein operates within mycotoxin biosynthesis. Its function is as follows. Trans-enoyl reductasee; part of the gene cluster that mediates the biosynthesis of GKK1032, fungal natural products containing a macrocyclic para-cyclophane connected to a decahydrofluorene ring system that show potent antitumor activities. Within the pathway, the PKS-NRPS gkaA, with the help of the trans-enoyl reductase gkaC, synthesize the polyketide-tyrosyl acyl thioester product which can be reductively off-loaded by the terminal reductase (R) domain in gkaA. The PKS module of gkaA acts in combination with the trans-acting enoyl reductase gkaC to produce a methylated polyketide attached to the ACP domain. In parallel, the adenylation (A) domain of the NRPS module activated L-tyrosine, which is then transferred to the ACP domain. The condensation (C) domain subsequently links this group to the polyketide chain, forming an enzyme-bound amide. The alpha/beta hydrolase gkaG is then required to catalyze the subsequent Knoevenagel condensation that affords the 3-pyrrolin-2-one ring, whereas the three proteins gkaB, gkadX and gkaZ then function synergistically to form the cyclophane. The polypeptide is Trans-enoyl reductase gkaC (Penicillium citrinum).